We begin with the raw amino-acid sequence, 406 residues long: Elongation factor Tu, chloroplastic (406 aa).

Positions 8-210 constitute a tr-type G domain; sequence KTHINIATIG…LLDSYIPKPK (203 aa). GTP contacts are provided by residues 17–24, 77–81, and 132–135; these read GHFNHGKT, DCPGH, and NKED. Thr24 is a Mg(2+) binding site.

Belongs to the TRAFAC class translation factor GTPase superfamily. Classic translation factor GTPase family. EF-Tu/EF-1A subfamily. Monomer.

It localises to the plastid. It is found in the chloroplast. It carries out the reaction GTP + H2O = GDP + phosphate + H(+). GTP hydrolase that promotes the GTP-dependent binding of aminoacyl-tRNA to the A-site of ribosomes during protein biosynthesis. This is Elongation factor Tu, chloroplastic (tufA) from Chaetosphaeridium globosum (Charophycean green alga).